The sequence spans 152 residues: Large ribosomal subunit protein bL9 (152 aa).

Belongs to the bacterial ribosomal protein bL9 family.

In terms of biological role, binds to the 23S rRNA. This is Large ribosomal subunit protein bL9 from Pelagibacter ubique (strain HTCC1062).